Consider the following 184-residue polypeptide: Adenine phosphoribosyltransferase (184 aa).

Belongs to the purine/pyrimidine phosphoribosyltransferase family. As to quaternary structure, homodimer.

It localises to the cytoplasm. The enzyme catalyses AMP + diphosphate = 5-phospho-alpha-D-ribose 1-diphosphate + adenine. It functions in the pathway purine metabolism; AMP biosynthesis via salvage pathway; AMP from adenine: step 1/1. Catalyzes a salvage reaction resulting in the formation of AMP, that is energically less costly than de novo synthesis. The polypeptide is Adenine phosphoribosyltransferase (Sphingopyxis alaskensis (strain DSM 13593 / LMG 18877 / RB2256) (Sphingomonas alaskensis)).